The primary structure comprises 422 residues: L-threonine dehydratase biosynthetic IlvA (422 aa).

Position 60 is an N6-(pyridoxal phosphate)lysine (Lys60). Residues Asn87, 190–194, and Ser315 each bind pyridoxal 5'-phosphate; that span reads GGGGL. Positions 339–413 constitute an ACT-like domain; that stretch reads HYFIVNFPQR…KPFHYVEVNK (75 aa).

Belongs to the serine/threonine dehydratase family. Homotetramer. Requires pyridoxal 5'-phosphate as cofactor.

The catalysed reaction is L-threonine = 2-oxobutanoate + NH4(+). The protein operates within amino-acid biosynthesis; L-isoleucine biosynthesis; 2-oxobutanoate from L-threonine: step 1/1. Catalyzes the anaerobic formation of alpha-ketobutyrate and ammonia from threonine in a two-step reaction. The first step involved a dehydration of threonine and a production of enamine intermediates (aminocrotonate), which tautomerizes to its imine form (iminobutyrate). Both intermediates are unstable and short-lived. The second step is the nonenzymatic hydrolysis of the enamine/imine intermediates to form 2-ketobutyrate and free ammonia. In the low water environment of the cell, the second step is accelerated by RidA. The chain is L-threonine dehydratase biosynthetic IlvA (ilvA) from Bacillus subtilis (strain 168).